Here is a 159-residue protein sequence, read N- to C-terminus: Phosphopantetheine adenylyltransferase (159 aa).

Serine 9 provides a ligand contact to substrate. ATP-binding positions include 9–10 (SF) and histidine 17. Positions 41, 73, and 87 each coordinate substrate. Residues 88-90 (GLR), glutamate 98, and 123-129 (YSYLSSS) each bind ATP.

This sequence belongs to the bacterial CoaD family. In terms of assembly, homohexamer. Mg(2+) serves as cofactor.

It is found in the cytoplasm. The enzyme catalyses (R)-4'-phosphopantetheine + ATP + H(+) = 3'-dephospho-CoA + diphosphate. Its pathway is cofactor biosynthesis; coenzyme A biosynthesis; CoA from (R)-pantothenate: step 4/5. Its function is as follows. Reversibly transfers an adenylyl group from ATP to 4'-phosphopantetheine, yielding dephospho-CoA (dPCoA) and pyrophosphate. This is Phosphopantetheine adenylyltransferase from Clostridium botulinum (strain Eklund 17B / Type B).